We begin with the raw amino-acid sequence, 222 residues long: Collectrin (222 aa).

Residues 1–14 form the signal peptide; it reads MLWLLFFLVTAIHA. Over 15–141 the chain is Extracellular; that stretch reads DLCRPDAENA…LAPPTDPSVP (127 aa). One can recognise a Collectrin-like domain in the interval 21-222; that stretch reads AENAFKVRLS…VTEDERLTPL (202 aa). 2 N-linked (GlcNAc...) asparagine glycosylation sites follow: asparagine 76 and asparagine 93. Residues 142-162 traverse the membrane as a helical segment; the sequence is IWIIIFGVIFCIVLVATMLLI. Residues 163–222 are Cytoplasmic-facing; sequence ISGIRQHRRKNKGPSEMEDSEDKCENVITIENGIPCDPLDMKGGHINDAFVTEDERLTPL. 2 positions are modified to phosphothreonine: threonine 214 and threonine 220.

This sequence belongs to the CLTRN family. Monomer. Homodimer; dimerization prevents CLTRN cleavage by BACE2. Interacts with SLC6A18; this interaction regulates the trafficking of SLC6A18 to the cell membrane and its amino acid transporter activity. Interacts with SLC6A19; this interaction regulates the trafficking of SLC6A19 to the cell membrane and its amino acid transporter activity. Interacts with SNAPIN. Post-translationally, glycosylated. Glycosylation is required for plasma membrane localization and for its cleavage by BACE2. Proteolytically processed in pancreatic beta cells by BACE2 leading to the generation and extracellular release of soluble CLTRN, and a corresponding cell-associated C-terminal fragment which is later cleaved by gamma-secretase. This shedding process inactivates CLTRN. Three cleavage sites have been identified for BACE2, two clustered sites after Phe-116 and Leu-118 and a more membrane proximal site at Phe-125; the preferred BACE2 cleavage site seems to be between Phe-125 and Leu-126, Phe-116 and Leu-118 act as alternative sites.

It localises to the cell membrane. In terms of biological role, plays an important role in amino acid transport by acting as binding partner of amino acid transporters SLC6A18 and SLC6A19, regulating their trafficking on the cell surface and their activity. May also play a role in trafficking of amino acid transporters SLC3A1 and SLC7A9 to the renal cortical cell membrane. Regulator of SNARE complex function. Stimulator of beta cell replication. The chain is Collectrin (CLTRN) from Bos taurus (Bovine).